We begin with the raw amino-acid sequence, 87 residues long: HssA/B-like protein 55 (87 aa).

The segment covering Met1–Pro13 has biased composition (polar residues). The disordered stretch occupies residues Met1–Met31. Low complexity predominate over residues Asn14–Met31.

This sequence belongs to the hssA/B family.

The protein is HssA/B-like protein 55 (hssl55) of Dictyostelium discoideum (Social amoeba).